A 49-amino-acid chain; its full sequence is Large ribosomal subunit protein eL40 (49 aa).

This sequence belongs to the eukaryotic ribosomal protein eL40 family.

The sequence is that of Large ribosomal subunit protein eL40 from Natronomonas pharaonis (strain ATCC 35678 / DSM 2160 / CIP 103997 / JCM 8858 / NBRC 14720 / NCIMB 2260 / Gabara) (Halobacterium pharaonis).